A 973-amino-acid polypeptide reads, in one-letter code: Valine--tRNA ligase (973 aa).

The short motif at 57–67 (PNVTGSLHMGH) is the 'HIGH' region element. The short motif at 569–573 (KMSKS) is the 'KMSKS' region element. K572 contacts ATP. Residues 901-970 (MAGLIDKEAE…AKILEQKIQI (70 aa)) adopt a coiled-coil conformation.

The protein belongs to the class-I aminoacyl-tRNA synthetase family. ValS type 1 subfamily. As to quaternary structure, monomer.

The protein resides in the cytoplasm. The catalysed reaction is tRNA(Val) + L-valine + ATP = L-valyl-tRNA(Val) + AMP + diphosphate. In terms of biological role, catalyzes the attachment of valine to tRNA(Val). As ValRS can inadvertently accommodate and process structurally similar amino acids such as threonine, to avoid such errors, it has a 'posttransfer' editing activity that hydrolyzes mischarged Thr-tRNA(Val) in a tRNA-dependent manner. This chain is Valine--tRNA ligase, found in Colwellia psychrerythraea (strain 34H / ATCC BAA-681) (Vibrio psychroerythus).